The chain runs to 96 residues: Protein RnfH (96 aa).

The protein belongs to the UPF0125 (RnfH) family.

This chain is Protein RnfH, found in Escherichia coli O139:H28 (strain E24377A / ETEC).